Here is a 430-residue protein sequence, read N- to C-terminus: Phosphomethylpyrimidine synthase (430 aa).

Substrate-binding positions include Asn-67, Met-96, Tyr-125, His-161, 183–185 (SRG), 224–227 (DALR), and Glu-263. His-267 serves as a coordination point for Zn(2+). Tyr-290 contacts substrate. Residue His-331 participates in Zn(2+) binding. [4Fe-4S] cluster contacts are provided by Cys-406, Cys-409, and Cys-413.

The protein belongs to the ThiC family. Homodimer. It depends on [4Fe-4S] cluster as a cofactor.

The catalysed reaction is 5-amino-1-(5-phospho-beta-D-ribosyl)imidazole + S-adenosyl-L-methionine = 4-amino-2-methyl-5-(phosphooxymethyl)pyrimidine + CO + 5'-deoxyadenosine + formate + L-methionine + 3 H(+). Its pathway is cofactor biosynthesis; thiamine diphosphate biosynthesis. Functionally, catalyzes the synthesis of the hydroxymethylpyrimidine phosphate (HMP-P) moiety of thiamine from aminoimidazole ribotide (AIR) in a radical S-adenosyl-L-methionine (SAM)-dependent reaction. The polypeptide is Phosphomethylpyrimidine synthase (Campylobacter jejuni subsp. jejuni serotype O:2 (strain ATCC 700819 / NCTC 11168)).